An 884-amino-acid polypeptide reads, in one-letter code: Alanine--tRNA ligase (884 aa).

Zn(2+)-binding residues include H565, H569, C675, and H679.

This sequence belongs to the class-II aminoacyl-tRNA synthetase family. Requires Zn(2+) as cofactor.

It is found in the cytoplasm. It catalyses the reaction tRNA(Ala) + L-alanine + ATP = L-alanyl-tRNA(Ala) + AMP + diphosphate. Catalyzes the attachment of alanine to tRNA(Ala) in a two-step reaction: alanine is first activated by ATP to form Ala-AMP and then transferred to the acceptor end of tRNA(Ala). Also edits incorrectly charged Ser-tRNA(Ala) and Gly-tRNA(Ala) via its editing domain. The sequence is that of Alanine--tRNA ligase from Maricaulis maris (strain MCS10) (Caulobacter maris).